The sequence spans 320 residues: Mitochondrial glycine transporter (320 aa).

Solcar repeat units follow at residues 8–92 (SKTT…LRQG), 121–205 (LSNW…LKRR), and 223–307 (SSSS…LILR). Transmembrane regions (helical) follow at residues 14 to 39 (FAAG…TRVQ), 67 to 93 (GTLP…RQGL), 127 to 152 (LATG…VRYE), 180 to 203 (GFGA…EQLK), 227 to 253 (INFV…KTRL), and 282 to 300 (GLGL…AWTV).

The protein belongs to the mitochondrial carrier (TC 2.A.29) family. SLC25A38 subfamily.

It is found in the mitochondrion inner membrane. The catalysed reaction is glycine(in) = glycine(out). Mitochondrial glycine transporter that imports glycine into the mitochondrial matrix. Plays an important role in providing glycine for the first enzymatic step in heme biosynthesis, the condensation of glycine with succinyl-CoA to produce 5-aminolevulinate (ALA) in the mitochondrial matrix. This chain is Mitochondrial glycine transporter, found in Aspergillus fumigatus (strain CBS 144.89 / FGSC A1163 / CEA10) (Neosartorya fumigata).